The following is a 113-amino-acid chain: MSIGIALATIAGGFLFPFAIRMMWGKMVDEWGAIGGWMAAAFIVGTVWTINHGIPKSMIYQSGTVWVDMAVAAGIGVFTASLLTGGKFSKSVVNLAAAVVGGVLGGFLLSLFL.

The next 4 helical transmembrane spans lie at 3 to 23 (IGIALATIAGGFLFPFAIRMM), 30 to 50 (EWGAIGGWMAAAFIVGTVWTI), 63 to 83 (GTVWVDMAVAAGIGVFTASLL), and 92 to 112 (VVNLAAAVVGGVLGGFLLSLF).

The protein resides in the membrane. Could be involved in the glycerol uptake either via facilitated diffusion or active transport. In Listeria innocua serovar 6a (strain ATCC BAA-680 / CLIP 11262), this protein is Putative glycerol transporter Lin0367.